The sequence spans 688 residues: MAKEFLIELGTEELPPTQLRTLAEAFAANFEAELKGAELAHEGVKWFAAPRRLALKVAALAESQSDKVVEKRGPAVSAAFDAEGNPTKAAQGWARGCGITVDQADRMVTDKGEWLLFKQEVKGQPTSEIVVELAAKALANLPIAKPMRWGNKTTQFIRPVKTLTMLMGSDLIEGEILGVASSRTIRGHRFMGEKEFTIDSAEQYPAILEERGKVMADYEARKAIILADAQKAAAAVGGIADLEDDLVEEVTSLVEWPVVLTAKFEEEFLKVPSEALVYTMKGDQKYFPVYDENKKLLPNFIFVSNIESKEPRYVIEGNEKVVRPRLADAEFFFNTDRKRPLIDRLPELEQAIFQQQLGTIKDKTDRITELAGYIAEQIGADVEKSKRAGLLAKCDLMTSMVFEFTDTQGVMGMHYARHDGEAEEVAVALNEQYMPRFAGDELPSNGVSTAVAMADKLDTIVGIFGIGQAPKGSDPFALRRASLGVLRIIVEYGYNLDLVDLVAKAKSLFGDRLTNDNVEQDVIEFMLGRFRAWYQDEGFSVDIIQAVLARRPTKPADFDQRVKAVSHFRELEAAESLAAANKRVGNILAKFDGELAEEIDLALLQEDAEKALAESVEVMTEALEPAFATGNYQEALSKLADLREPVDAFFDNVMVMADDEALKKNRLTLLNNLRNLFLQIADISLLQK.

It belongs to the class-II aminoacyl-tRNA synthetase family. As to quaternary structure, tetramer of two alpha and two beta subunits.

The protein resides in the cytoplasm. The catalysed reaction is tRNA(Gly) + glycine + ATP = glycyl-tRNA(Gly) + AMP + diphosphate. This is Glycine--tRNA ligase beta subunit from Vibrio parahaemolyticus serotype O3:K6 (strain RIMD 2210633).